A 316-amino-acid polypeptide reads, in one-letter code: tRNA dimethylallyltransferase (316 aa).

17–24 contributes to the ATP binding site; that stretch reads GPTASGKT. 19 to 24 serves as a coordination point for substrate; the sequence is TASGKT. Interaction with substrate tRNA stretches follow at residues 42 to 45, 166 to 170, 247 to 252, and 280 to 287; these read DSAL, QRLSR, RCVGYR, and KRQITWLR.

Belongs to the IPP transferase family. In terms of assembly, monomer. Requires Mg(2+) as cofactor.

It catalyses the reaction adenosine(37) in tRNA + dimethylallyl diphosphate = N(6)-dimethylallyladenosine(37) in tRNA + diphosphate. In terms of biological role, catalyzes the transfer of a dimethylallyl group onto the adenine at position 37 in tRNAs that read codons beginning with uridine, leading to the formation of N6-(dimethylallyl)adenosine (i(6)A). In Escherichia coli O81 (strain ED1a), this protein is tRNA dimethylallyltransferase.